A 334-amino-acid chain; its full sequence is N-acetyl-gamma-glutamyl-phosphate reductase (334 aa).

The active site involves Cys154.

It belongs to the NAGSA dehydrogenase family. Type 1 subfamily.

It is found in the cytoplasm. The enzyme catalyses N-acetyl-L-glutamate 5-semialdehyde + phosphate + NADP(+) = N-acetyl-L-glutamyl 5-phosphate + NADPH + H(+). The protein operates within amino-acid biosynthesis; L-arginine biosynthesis; N(2)-acetyl-L-ornithine from L-glutamate: step 3/4. Functionally, catalyzes the NADPH-dependent reduction of N-acetyl-5-glutamyl phosphate to yield N-acetyl-L-glutamate 5-semialdehyde. The protein is N-acetyl-gamma-glutamyl-phosphate reductase of Shigella flexneri.